A 347-amino-acid polypeptide reads, in one-letter code: Large ribosomal subunit protein uL10 (347 aa).

Positions 310–347 are disordered; it reads ATVAAPAAEEEKKEEEPEEEEEDHAEEDGMAGLGALFG. Residues 325 to 338 show a composition bias toward acidic residues; it reads EPEEEEEDHAEEDG.

It belongs to the universal ribosomal protein uL10 family. As to quaternary structure, part of the 50S ribosomal subunit. Forms part of the ribosomal stalk which helps the ribosome interact with GTP-bound translation factors. Forms a heptameric L10(L12)2(L12)2(L12)2 complex, where L10 forms an elongated spine to which the L12 dimers bind in a sequential fashion.

Forms part of the ribosomal stalk, playing a central role in the interaction of the ribosome with GTP-bound translation factors. This chain is Large ribosomal subunit protein uL10, found in Methanosarcina mazei (strain ATCC BAA-159 / DSM 3647 / Goe1 / Go1 / JCM 11833 / OCM 88) (Methanosarcina frisia).